Reading from the N-terminus, the 268-residue chain is Hemin import ATP-binding protein HmuV (268 aa).

The region spanning 5 to 242 (IEARHLSKRA…ETIRDIFEID (238 aa)) is the ABC transporter domain. 37 to 44 (GPNGAGKS) contacts ATP.

Belongs to the ABC transporter superfamily. Heme (hemin) importer (TC 3.A.1.14.5) family. In terms of assembly, the complex is composed of two ATP-binding proteins (HmuV), two transmembrane proteins (HmuU) and a solute-binding protein (HmuT).

The protein resides in the cell inner membrane. Functionally, part of the ABC transporter complex HmuTUV involved in hemin import. Responsible for energy coupling to the transport system. The protein is Hemin import ATP-binding protein HmuV of Bradyrhizobium diazoefficiens (strain JCM 10833 / BCRC 13528 / IAM 13628 / NBRC 14792 / USDA 110).